The following is a 114-amino-acid chain: Protein ORF3 (114 aa).

Hydrophobic stretches follow at residues 6 to 22 (CDLGLFCCCSSCFCLCC) and 33 to 53 (AVVGGAAAVPAVVSGVTGLIL). The segment at 28–68 (VSRLAAVVGGAAAVPAVVSGVTGLILSPSQSPIFIQPTPSP) is interaction with host HPX. The interaction with the capsid protein stretch occupies residues 48–72 (VTGLILSPSQSPIFIQPTPSPPMSP). Phosphoserine; by host is present on serine 71. The segment at 72-114 (PLRPGLDLVFANQPDHSAPLGVTRPSAPPLPHVVDLPQLGPRR) is homodimerization, and interaction with host AMBP/bikunin. The interval 91–114 (LGVTRPSAPPLPHVVDLPQLGPRR) is disordered. The interaction with host SRC, HCK, FYN, PIK3R3 and GRB2 stretch occupies residues 95-104 (RPSAPPLPHV). Residues 96 to 99 (PSAP) carry the PTAP/PSAP motif motif.

Belongs to the hepevirus ORF3 protein family. Forms homooligomers. Interacts with host SRC, HCK, FYN, PIK3R3 and GRB2 (via SH3 domain); binding does not activate the kinases. Interacts with host AMBP/bikunin and AMBP/alpha-1-microglobulin peptides. Interacts with host HPX/hemopexin. Interacts (when phosphorylated) with capsid protein ORF2. Interacts with host TSG101; this interaction plays a role in viral release from the host cell. Interacts with host SIRPA; this interaction down-regulates the phosphorylation of host IRF3. Palmitoylated in the N-terminus.

The protein resides in the host endoplasmic reticulum membrane. Its subcellular location is the host cytoplasm. The protein localises to the host cytoskeleton. It localises to the virion. It is found in the host cell membrane. In terms of biological role, small multifunctional phosphoprotein involved in virion morphogenesis, egress and counteracting host innate immunity. Plays critical roles in the final steps of viral release by interacting with host TSG101, a member of the vacuolar protein-sorting pathway and using other cellular host proteins involved in vesicle formation pathway. Also acts as a viroporin and forms ion conductive pores allowing viral particle release. Impairs the generation of type I interferon by down-regulating host TLR3 and TLR7 as well as their downstream signaling pathways. Down-regulates the phosphorylation of host IRF3 via the interaction with host SIRP-alpha, thereby inhibiting IFN-I expression. Interacts with host microtubules. This Homo sapiens (Human) protein is Protein ORF3.